The following is a 295-amino-acid chain: Ethanolamine ammonia-lyase small subunit (295 aa).

Residues Val-207, Glu-228, and Cys-258 each contribute to the adenosylcob(III)alamin site.

The protein belongs to the EutC family. As to quaternary structure, the basic unit is a heterodimer which dimerizes to form tetramers. The heterotetramers trimerize; 6 large subunits form a core ring with 6 small subunits projecting outwards. Adenosylcob(III)alamin is required as a cofactor.

Its subcellular location is the bacterial microcompartment. It catalyses the reaction ethanolamine = acetaldehyde + NH4(+). The protein operates within amine and polyamine degradation; ethanolamine degradation. In terms of biological role, catalyzes the deamination of various vicinal amino-alcohols to oxo compounds. Allows this organism to utilize ethanolamine as the sole source of nitrogen and carbon in the presence of external vitamin B12. The sequence is that of Ethanolamine ammonia-lyase small subunit from Escherichia coli (strain UTI89 / UPEC).